The sequence spans 389 residues: Pre-mRNA-splicing factor PRP46 (389 aa).

WD repeat units follow at residues 83-123, 126-165, 173-212, 215-254, 257-298, 308-347, and 356-389; these read AHQG…LKAV, GHVL…SDAG, GHLG…EAMT, GHTN…TELL, NHSK…NEFG, DNSR…LQQS, and PEQS…GTSY.

The protein belongs to the WD repeat PRL1/PRL2 family. As to quaternary structure, associated with the spliceosome.

It localises to the cytoplasm. Its subcellular location is the nucleus. In terms of biological role, involved in pre-mRNA splicing and required for cell cycle progression at G2/M. In Candida albicans (strain SC5314 / ATCC MYA-2876) (Yeast), this protein is Pre-mRNA-splicing factor PRP46 (PRP46).